The primary structure comprises 230 residues: Ribosomal RNA small subunit methyltransferase G (230 aa).

Residues G91, L96, 142–143, and R161 contribute to the S-adenosyl-L-methionine site; that span reads VE.

The protein belongs to the methyltransferase superfamily. RNA methyltransferase RsmG family.

The protein resides in the cytoplasm. The catalysed reaction is guanosine(527) in 16S rRNA + S-adenosyl-L-methionine = N(7)-methylguanosine(527) in 16S rRNA + S-adenosyl-L-homocysteine. In terms of biological role, specifically methylates the N7 position of guanine in position 527 of 16S rRNA. This Burkholderia pseudomallei (strain K96243) protein is Ribosomal RNA small subunit methyltransferase G.